We begin with the raw amino-acid sequence, 489 residues long: Beta-dihydromenaquinone-9 omega-hydroxylase (489 aa).

Cys-435 contacts heme.

It belongs to the cytochrome P450 family. Requires heme as cofactor.

The protein resides in the cytoplasm. It carries out the reaction beta-dihydromenaquinone-9 + 2 reduced [2Fe-2S]-[ferredoxin] + O2 + 2 H(+) = omega-hydroxy-beta-dihydromenaquinone-9 + 2 oxidized [2Fe-2S]-[ferredoxin] + H2O. Its function is as follows. Involved in the biosynthesis of sulfomenaquinone (SMK, initially named S881 on the basis of its mass), which is localized in the outer envelope of M.bovis and negatively regulates its virulence. Catalyzes the hydroxylation of beta-dihydromenaquinone-9, leading to the formation of omega-hydroxy-beta-dihydromenaquinone-9. This chain is Beta-dihydromenaquinone-9 omega-hydroxylase (cyp128), found in Mycobacterium bovis (strain ATCC BAA-935 / AF2122/97).